The following is a 283-amino-acid chain: MRFFTEIKPLKTYVAEQKREGKIIGFVPTMGYLHDGHLSLVRKAKLQADVVIVSIFVNPLQFGPNEDFAKYPRDLERDLALLQEEGVDCVFAPSAEEMYKEGFSTFVEVNGEITEVMCGKSRPGHFKGVATVVTKLFNIVTPDLAFFGQKDAQQLFIIEKLVRDLNLNVEIVSVPTRREEDGLAMSSRNTYLNPEERKAATILYRALKRGEELVLAGERNPERLKKLIEEFIKTEPLARIDYVEVRSVPDLKAMDVIKGKFIIALAVYIGSTRLIDNFILEVD.

30–37 (MGYLHDGH) contributes to the ATP binding site. His37 (proton donor) is an active-site residue. Residue Gln61 coordinates (R)-pantoate. Position 61 (Gln61) interacts with beta-alanine. ATP is bound at residue 148 to 151 (GQKD). Gln154 lines the (R)-pantoate pocket. 185 to 188 (MSSR) is an ATP binding site.

This sequence belongs to the pantothenate synthetase family. In terms of assembly, homodimer.

It is found in the cytoplasm. The catalysed reaction is (R)-pantoate + beta-alanine + ATP = (R)-pantothenate + AMP + diphosphate + H(+). Its pathway is cofactor biosynthesis; (R)-pantothenate biosynthesis; (R)-pantothenate from (R)-pantoate and beta-alanine: step 1/1. Functionally, catalyzes the condensation of pantoate with beta-alanine in an ATP-dependent reaction via a pantoyl-adenylate intermediate. This Carboxydothermus hydrogenoformans (strain ATCC BAA-161 / DSM 6008 / Z-2901) protein is Pantothenate synthetase.